The following is a 343-amino-acid chain: tRNA N6-adenosine threonylcarbamoyltransferase (343 aa).

Positions 111 and 115 each coordinate Fe cation. Substrate is bound by residues 134-138, Asp167, Gly180, and Asn276; that span reads LVSGG. Asp304 contributes to the Fe cation binding site.

The protein belongs to the KAE1 / TsaD family. It depends on Fe(2+) as a cofactor.

It is found in the cytoplasm. It carries out the reaction L-threonylcarbamoyladenylate + adenosine(37) in tRNA = N(6)-L-threonylcarbamoyladenosine(37) in tRNA + AMP + H(+). Required for the formation of a threonylcarbamoyl group on adenosine at position 37 (t(6)A37) in tRNAs that read codons beginning with adenine. Is involved in the transfer of the threonylcarbamoyl moiety of threonylcarbamoyl-AMP (TC-AMP) to the N6 group of A37, together with TsaE and TsaB. TsaD likely plays a direct catalytic role in this reaction. This chain is tRNA N6-adenosine threonylcarbamoyltransferase, found in Chromohalobacter salexigens (strain ATCC BAA-138 / DSM 3043 / CIP 106854 / NCIMB 13768 / 1H11).